The primary structure comprises 157 residues: Thioredoxin 2 (157 aa).

The first 23 residues, 1–23 (MKKYIFFFLFSFINFFFVYDVTC), serve as a signal peptide directing secretion. Residues 46 to 157 (LRMFKKVPRL…DLIALIKKHL (112 aa)) form the Thioredoxin domain. Catalysis depends on nucleophile residues Cys-82 and Cys-85. An intrachain disulfide couples Cys-82 to Cys-85.

It belongs to the thioredoxin family. As to quaternary structure, monomer. Component of the Plasmodium translocon of exported proteins (PTEX) complex composed of HSP101, EXP2, PTEX150, PTEX88 and TRX2. Post-translationally, the disulfide bond between Cys-82 and Cys-85 acts as a redox-active center and is reduced by thioredoxin reductase TRXR.

It is found in the parasitophorous vacuole membrane. In terms of biological role, participates in various redox reactions through the reversible oxidation of its active center dithiol to a disulfide and catalyzes dithiol-disulfide exchange reactions. As part of the translocon PTEX complex, plays a role in the export of parasite proteins into the host erythrocyte. The translocon PTEX complex is a multi-protein machinery resident in the parasite parasitophorous vacuolar membrane, responsible for protein secretion into host cells. May contribute to the unfolding of proteins containing the PEXEL localization motif before their passage through the translocon or regulate the PTEX complex function. This Plasmodium falciparum (isolate 3D7) protein is Thioredoxin 2.